The chain runs to 208 residues: Ribosomal RNA small subunit methyltransferase G (208 aa).

Residues glycine 78, phenylalanine 83, 101–103, 129–130, and arginine 142 contribute to the S-adenosyl-L-methionine site; these read ERS and IE.

Belongs to the methyltransferase superfamily. RNA methyltransferase RsmG family.

It localises to the cytoplasm. Functionally, specifically methylates the N7 position of a guanine in 16S rRNA. The sequence is that of Ribosomal RNA small subunit methyltransferase G from Borrelia garinii subsp. bavariensis (strain ATCC BAA-2496 / DSM 23469 / PBi) (Borreliella bavariensis).